The chain runs to 239 residues: Large ribosomal subunit protein uL2 (239 aa).

Disordered stretches follow at residues 1-21 (MGKSLIQQRRGKGSPTFKSPS) and 203-239 (PFGGKEHHPGKPTTTSRRAPPGRKVGHIAARRTGRRK). Positions 222–239 (PPGRKVGHIAARRTGRRK) are enriched in basic residues.

Belongs to the universal ribosomal protein uL2 family. As to quaternary structure, part of the 50S ribosomal subunit. Forms a bridge to the 30S subunit in the 70S ribosome.

Its function is as follows. One of the primary rRNA binding proteins. Required for association of the 30S and 50S subunits to form the 70S ribosome, for tRNA binding and peptide bond formation. It has been suggested to have peptidyltransferase activity; this is somewhat controversial. Makes several contacts with the 16S rRNA in the 70S ribosome. The chain is Large ribosomal subunit protein uL2 from Pyrococcus furiosus (strain ATCC 43587 / DSM 3638 / JCM 8422 / Vc1).